Here is a 391-residue protein sequence, read N- to C-terminus: AN1-type zinc finger and UBX domain-containing protein DDB_G0268260 (391 aa).

Positions 1–16 (MQQQSPPTAPQQQQQQ) are enriched in low complexity. The segment at 1-20 (MQQQSPPTAPQQQQQQQRER) is disordered. AN1-type zinc fingers lie at residues 26 to 74 (DHIG…QREN) and 118 to 166 (APKS…IINS). Residues C32, C37, C47, C50, C55, H58, H64, C66, C124, C129, C139, C142, C147, H150, H156, and C158 each coordinate Zn(2+). Positions 185–236 (NINNNINNNKNNNNNNNNNNNNNNNNNNNNNNNNNNNNNNNNNNNNNSNNNN) are enriched in low complexity. The segment at 185–240 (NINNNINNNKNNNNNNNNNNNNNNNNNNNNNNNNNNNNNNNNNNNNNSNNNNKLIY) is disordered. In terms of domain architecture, UBX spans 278 to 356 (SSEEIGEIGI…GLLPVSTLYM (79 aa)).

In Dictyostelium discoideum (Social amoeba), this protein is AN1-type zinc finger and UBX domain-containing protein DDB_G0268260.